We begin with the raw amino-acid sequence, 468 residues long: N-acyl-phosphatidylethanolamine-hydrolyzing phospholipase D, mitochondrial (468 aa).

The transit peptide at 1–39 directs the protein to the mitochondrion; sequence MNFVTCHVQMRLLLQRRLVRLRESELFRPQTSLSTFKRH. A helical transmembrane segment spans residues 54–76; it reads YARILLLSVLVPYTGYAFYVSLA. The Zn(2+) site is built by H265, H267, D269, H270, H332, and H425.

The protein belongs to the NAPE-PLD family. It depends on Zn(2+) as a cofactor.

Its subcellular location is the mitochondrion membrane. It catalyses the reaction an N-acyl-1,2-diacyl-sn-glycero-3-phosphoethanolamine + H2O = an N-acylethanolamine + a 1,2-diacyl-sn-glycero-3-phosphate + H(+). Functionally, hydrolyzes N-acyl-phosphatidylethanolamines (NAPEs) to produce N-acylethanolamines (NAEs). In Saccharomyces cerevisiae (strain ATCC 204508 / S288c) (Baker's yeast), this protein is N-acyl-phosphatidylethanolamine-hydrolyzing phospholipase D, mitochondrial (FMP30).